We begin with the raw amino-acid sequence, 892 residues long: Alanine--tRNA ligase (892 aa).

Residues His-574, His-578, Cys-676, and His-680 each contribute to the Zn(2+) site.

It belongs to the class-II aminoacyl-tRNA synthetase family. It depends on Zn(2+) as a cofactor.

The protein resides in the cytoplasm. The catalysed reaction is tRNA(Ala) + L-alanine + ATP = L-alanyl-tRNA(Ala) + AMP + diphosphate. Functionally, catalyzes the attachment of alanine to tRNA(Ala) in a two-step reaction: alanine is first activated by ATP to form Ala-AMP and then transferred to the acceptor end of tRNA(Ala). Also edits incorrectly charged Ser-tRNA(Ala) and Gly-tRNA(Ala) via its editing domain. The protein is Alanine--tRNA ligase of Prochlorococcus marinus (strain MIT 9313).